Here is a 381-residue protein sequence, read N- to C-terminus: Galactose-1-phosphate uridylyltransferase (381 aa).

Zn(2+)-binding residues include cysteine 65 and cysteine 68. 90-91 (ND) serves as a coordination point for UDP-alpha-D-glucose. Histidine 131 contacts Zn(2+). Position 175 (asparagine 175) interacts with UDP-alpha-D-glucose. Histidine 186 contacts Zn(2+). Histidine 188 serves as the catalytic Tele-UMP-histidine intermediate. Glutamine 190 contributes to the UDP-alpha-D-glucose binding site. Fe cation contacts are provided by glutamate 204, histidine 306, histidine 323, and histidine 325. Residues 338–341 (KFMV) and 343–344 (FE) each bind UDP-alpha-D-glucose.

It belongs to the galactose-1-phosphate uridylyltransferase type 1 family. Homodimer. Zn(2+) serves as cofactor.

The enzyme catalyses alpha-D-galactose 1-phosphate + UDP-alpha-D-glucose = alpha-D-glucose 1-phosphate + UDP-alpha-D-galactose. It functions in the pathway carbohydrate metabolism; galactose metabolism. The polypeptide is Galactose-1-phosphate uridylyltransferase (GAL7) (Cryptococcus neoformans var. neoformans serotype D (strain B-3501A) (Filobasidiella neoformans)).